The chain runs to 287 residues: MKVNTNIISLKTQEYLRKNNEGMTQAQERLASGKRINSSLDDAAGLAVVTRMNVKSTGLDAASKNSSMGIDLLQTADSALSSMSSILQRMRQLAVQSSNGSFSDEDRKQYTAEFGSLIKELDHVADTTNYNNIKLLDQTATNAATQVSIQASDKANDLINIDLFNAKGLSAGTITLGSGSTVAGYSALSVADADSSQEATEAIDELINNISNGRALLGAGMSRLSYNVSNVNNQSIATKASASSIEDADMAAEMSEMTKYKILTQTSISMLSQANQTPQMLTQLINS.

The protein belongs to the bacterial flagellin family.

Its subcellular location is the secreted. The protein localises to the bacterial flagellum. Functionally, flagellin is the subunit protein which polymerizes to form the filaments of bacterial flagella. This is Flagellin (flaA) from Listeria innocua serovar 6a (strain ATCC BAA-680 / CLIP 11262).